We begin with the raw amino-acid sequence, 115 residues long: Non-specific lipid-transfer protein (115 aa).

An N-terminal signal peptide occupies residues Met-1–Ala-24. Disulfide bonds link Cys-27-Cys-74, Cys-37-Cys-51, Cys-52-Cys-97, and Cys-72-Cys-111.

This sequence belongs to the plant LTP family.

In terms of biological role, plant non-specific lipid-transfer proteins transfer phospholipids as well as galactolipids across membranes. May play a role in wax or cutin deposition in the cell walls of expanding epidermal cells and certain secretory tissues. This Malus domestica (Apple) protein is Non-specific lipid-transfer protein (MALD3).